The primary structure comprises 125 residues: Ribosome-binding factor A (125 aa).

The protein belongs to the RbfA family. Monomer. Binds 30S ribosomal subunits, but not 50S ribosomal subunits or 70S ribosomes.

Its subcellular location is the cytoplasm. Functionally, one of several proteins that assist in the late maturation steps of the functional core of the 30S ribosomal subunit. Associates with free 30S ribosomal subunits (but not with 30S subunits that are part of 70S ribosomes or polysomes). Required for efficient processing of 16S rRNA. May interact with the 5'-terminal helix region of 16S rRNA. The chain is Ribosome-binding factor A from Chloroherpeton thalassium (strain ATCC 35110 / GB-78).